The chain runs to 253 residues: 5'/3'-nucleotidase SurE (253 aa).

Asp8, Asp9, Ser39, and Asn92 together coordinate a divalent metal cation.

Belongs to the SurE nucleotidase family. A divalent metal cation is required as a cofactor.

Its subcellular location is the cytoplasm. The enzyme catalyses a ribonucleoside 5'-phosphate + H2O = a ribonucleoside + phosphate. The catalysed reaction is a ribonucleoside 3'-phosphate + H2O = a ribonucleoside + phosphate. It carries out the reaction [phosphate](n) + H2O = [phosphate](n-1) + phosphate + H(+). Nucleotidase with a broad substrate specificity as it can dephosphorylate various ribo- and deoxyribonucleoside 5'-monophosphates and ribonucleoside 3'-monophosphates with highest affinity to 3'-AMP. Also hydrolyzes polyphosphate (exopolyphosphatase activity) with the preference for short-chain-length substrates (P20-25). Might be involved in the regulation of dNTP and NTP pools, and in the turnover of 3'-mononucleotides produced by numerous intracellular RNases (T1, T2, and F) during the degradation of various RNAs. The polypeptide is 5'/3'-nucleotidase SurE (Salmonella arizonae (strain ATCC BAA-731 / CDC346-86 / RSK2980)).